Reading from the N-terminus, the 314-residue chain is Triosephosphate isomerase, chloroplastic (314 aa).

Positions 1–22 (MAVASTSLASQLSGPKSLSQPY) are enriched in polar residues. Residues 1–25 (MAVASTSLASQLSGPKSLSQPYSGL) are disordered. The transit peptide at 1-59 (MAVASTSLASQLSGPKSLSQPYSGLRRSCPKLDQSHSSLFQHLSLSSSSRKASRAVVAM) directs the protein to the chloroplast. Substrate-binding residues include Asn-70 and Lys-72. His-154 (electrophile) is an active-site residue. Glu-224 functions as the Proton acceptor in the catalytic mechanism.

This sequence belongs to the triosephosphate isomerase family. In terms of assembly, homodimer.

The protein localises to the plastid. Its subcellular location is the chloroplast. It carries out the reaction D-glyceraldehyde 3-phosphate = dihydroxyacetone phosphate. It participates in carbohydrate biosynthesis; Calvin cycle. This Fragaria ananassa (Strawberry) protein is Triosephosphate isomerase, chloroplastic (TPI).